Consider the following 336-residue polypeptide: Ferrochelatase (336 aa).

Fe cation contacts are provided by His206 and Glu287.

The protein belongs to the ferrochelatase family.

It localises to the cytoplasm. It carries out the reaction heme b + 2 H(+) = protoporphyrin IX + Fe(2+). The protein operates within porphyrin-containing compound metabolism; protoheme biosynthesis; protoheme from protoporphyrin-IX: step 1/1. In terms of biological role, catalyzes the ferrous insertion into protoporphyrin IX. This Neisseria gonorrhoeae (strain ATCC 700825 / FA 1090) protein is Ferrochelatase.